Consider the following 241-residue polypeptide: MRKSVIAGNWKMHMTCADTKKYLEEFLPLIEEIPNDRKIVIAPPFTAISTFSNYTNFDYLNIASQNIHWEDKGAFTAEISPNMLIEHKVKYAIVGHSEPRKYFSESDEQINKRAVFAQSSGLTPIVCVGETLEQRERGEADRVITRQVEQGLENTDPSNLIVAYEPIWAIGTGKTCEASDANKICALIRSLIGFSDVIIQYGGSVKPNNIDEIMSMSDIDGVLVGGSSLDPISFSRIANFE.

Residue 9–11 coordinates substrate; that stretch reads NWK. Residue H96 is the Electrophile of the active site. The active-site Proton acceptor is E165. Substrate contacts are provided by residues G171, S204, and 225-226; that span reads GG.

Belongs to the triosephosphate isomerase family. In terms of assembly, homodimer.

It is found in the cytoplasm. The catalysed reaction is D-glyceraldehyde 3-phosphate = dihydroxyacetone phosphate. The protein operates within carbohydrate biosynthesis; gluconeogenesis. It functions in the pathway carbohydrate degradation; glycolysis; D-glyceraldehyde 3-phosphate from glycerone phosphate: step 1/1. In terms of biological role, involved in the gluconeogenesis. Catalyzes stereospecifically the conversion of dihydroxyacetone phosphate (DHAP) to D-glyceraldehyde-3-phosphate (G3P). The polypeptide is Triosephosphate isomerase (Prochlorococcus marinus subsp. pastoris (strain CCMP1986 / NIES-2087 / MED4)).